The following is a 228-amino-acid chain: MQKLKQQVFEANMDLPRYGLVTFTWGNVSAIDRERGLVVIKPSGVAYETMKAADMVVVDMSGKVVEGEYRPSSDTATHLELYRRYPSLGGIVHTHSTHATAWAQAGLAIPALGTTHADYFFGDIPCTRGLSEEEVQGEYELNTGKVIIETLGDAEPLHTPGIVVYQHGPFAWGKDAHDAVHNAVVMEEVAKMAWIARSINPQLNHIDSYLMNKHFMRKHGPNAYYGQK.

Substrate-binding positions include 26-27 (GN), 43-44 (SG), and 72-73 (SS). Zn(2+) contacts are provided by D74, H93, and H95. D118 (proton donor/acceptor) is an active-site residue. Residue H167 participates in Zn(2+) binding. The active-site Proton donor/acceptor is Y225.

The protein belongs to the aldolase class II family. AraD/FucA subfamily. The cofactor is Zn(2+).

It carries out the reaction L-ribulose 5-phosphate = D-xylulose 5-phosphate. The protein operates within cofactor degradation; L-ascorbate degradation; D-xylulose 5-phosphate from L-ascorbate: step 4/4. Functionally, catalyzes the isomerization of L-ribulose 5-phosphate to D-xylulose 5-phosphate. Is involved in the anaerobic L-ascorbate utilization. The sequence is that of L-ribulose-5-phosphate 4-epimerase UlaF from Escherichia coli (strain SMS-3-5 / SECEC).